A 442-amino-acid polypeptide reads, in one-letter code: Protein translocase subunit SecY (442 aa).

10 helical membrane passes run 29 to 49 (LITI…VPDI), 69 to 89 (IFTG…LPYI), 126 to 146 (YIAF…LLRP), 153 to 173 (PLFI…VMWI), 182 to 202 (IGNG…PQTL), 217 to 237 (ITAV…IVFV), 274 to 294 (VMPI…AGFA), 320 to 340 (VYTV…ASLI), 377 to 397 (LTFL…FVEQ), and 400 to 420 (GVTT…GVAI).

It belongs to the SecY/SEC61-alpha family. As to quaternary structure, component of the Sec protein translocase complex. Heterotrimer consisting of SecY, SecE and SecG subunits. The heterotrimers can form oligomers, although 1 heterotrimer is thought to be able to translocate proteins. Interacts with the ribosome. Interacts with SecDF, and other proteins may be involved. Interacts with SecA.

The protein resides in the cell inner membrane. The protein localises to the cellular thylakoid membrane. In terms of biological role, the central subunit of the protein translocation channel SecYEG. Consists of two halves formed by TMs 1-5 and 6-10. These two domains form a lateral gate at the front which open onto the bilayer between TMs 2 and 7, and are clamped together by SecE at the back. The channel is closed by both a pore ring composed of hydrophobic SecY resides and a short helix (helix 2A) on the extracellular side of the membrane which forms a plug. The plug probably moves laterally to allow the channel to open. The ring and the pore may move independently. This is Protein translocase subunit SecY from Synechocystis sp. (strain ATCC 27184 / PCC 6803 / Kazusa).